We begin with the raw amino-acid sequence, 171 residues long: Peptidyl-prolyl cis-trans isomerase 7 (171 aa).

One can recognise a PPIase cyclophilin-type domain in the interval 7–170 (FFDITIAGKP…SECLIADCGQ (164 aa)).

Belongs to the cyclophilin-type PPIase family.

The enzyme catalyses [protein]-peptidylproline (omega=180) = [protein]-peptidylproline (omega=0). PPIases accelerate the folding of proteins. It catalyzes the cis-trans isomerization of proline imidic peptide bonds in oligopeptides. In Caenorhabditis elegans, this protein is Peptidyl-prolyl cis-trans isomerase 7 (cyn-7).